Here is a 152-residue protein sequence, read N- to C-terminus: Deoxyuridine 5'-triphosphate nucleotidohydrolase (152 aa).

Substrate is bound by residues 71-73 (RSG), Asn84, 88-90 (LID), and Met98.

It belongs to the dUTPase family. Mg(2+) serves as cofactor.

The enzyme catalyses dUTP + H2O = dUMP + diphosphate + H(+). It participates in pyrimidine metabolism; dUMP biosynthesis; dUMP from dCTP (dUTP route): step 2/2. Functionally, this enzyme is involved in nucleotide metabolism: it produces dUMP, the immediate precursor of thymidine nucleotides and it decreases the intracellular concentration of dUTP so that uracil cannot be incorporated into DNA. This Hahella chejuensis (strain KCTC 2396) protein is Deoxyuridine 5'-triphosphate nucleotidohydrolase.